Here is a 577-residue protein sequence, read N- to C-terminus: Probable L-gulonolactone oxidase 4 (577 aa).

The signal sequence occupies residues 1 to 17; the sequence is MSFWLSLIFCFFTFASS. The FAD-binding PCMH-type domain occupies 46-228; that stretch reads SICKAAKVEY…SQVTFELQPM (183 aa).

The protein belongs to the oxygen-dependent FAD-linked oxidoreductase family. It depends on FAD as a cofactor.

It catalyses the reaction L-gulono-1,4-lactone + O2 = L-ascorbate + H2O2 + H(+). It functions in the pathway cofactor biosynthesis; L-ascorbate biosynthesis. Its function is as follows. May be involved in the biosynthesis of ascorbic acid. The chain is Probable L-gulonolactone oxidase 4 from Arabidopsis thaliana (Mouse-ear cress).